The primary structure comprises 559 residues: DNA ligase (559 aa).

E231 contributes to the ATP binding site. K233 functions as the N6-AMP-lysine intermediate in the catalytic mechanism. ATP contacts are provided by R238 and E285. E285 and E379 together coordinate Mg(2+). ATP is bound by residues K384 and K399.

Belongs to the ATP-dependent DNA ligase family. As to quaternary structure, interacts with host TOP2A and TOP2B. Mg(2+) is required as a cofactor.

The protein localises to the host cytoplasm. It carries out the reaction ATP + (deoxyribonucleotide)n-3'-hydroxyl + 5'-phospho-(deoxyribonucleotide)m = (deoxyribonucleotide)n+m + AMP + diphosphate.. DNA ligase that seals nicks in double-stranded DNA during DNA replication, DNA recombination and DNA repair. Recruits cellular topoisomerase II to sites of viral replication and assembly. The protein is DNA ligase (OPG180) of Monkeypox virus.